A 461-amino-acid polypeptide reads, in one-letter code: Asparagine--tRNA ligase (461 aa).

Belongs to the class-II aminoacyl-tRNA synthetase family. As to quaternary structure, homodimer.

The protein resides in the cytoplasm. The enzyme catalyses tRNA(Asn) + L-asparagine + ATP = L-asparaginyl-tRNA(Asn) + AMP + diphosphate + H(+). The sequence is that of Asparagine--tRNA ligase from Solibacter usitatus (strain Ellin6076).